The sequence spans 197 residues: Putative manganese efflux pump MntP (197 aa).

A run of 6 helical transmembrane segments spans residues valine 8–alanine 28, valine 43–leucine 63, valine 66–leucine 86, leucine 123–leucine 143, tryptophan 146–leucine 166, and lysine 177–serine 197.

The protein belongs to the MntP (TC 9.B.29) family.

It is found in the cell inner membrane. Its function is as follows. Probably functions as a manganese efflux pump. This Psychrobacter arcticus (strain DSM 17307 / VKM B-2377 / 273-4) protein is Putative manganese efflux pump MntP.